Reading from the N-terminus, the 337-residue chain is tRNA N6-adenosine threonylcarbamoyltransferase (337 aa).

Positions 111 and 115 each coordinate Fe cation. Substrate-binding positions include 134–138 (LVSGG), D167, G180, and N272. D300 is a Fe cation binding site.

It belongs to the KAE1 / TsaD family. Requires Fe(2+) as cofactor.

Its subcellular location is the cytoplasm. It catalyses the reaction L-threonylcarbamoyladenylate + adenosine(37) in tRNA = N(6)-L-threonylcarbamoyladenosine(37) in tRNA + AMP + H(+). Functionally, required for the formation of a threonylcarbamoyl group on adenosine at position 37 (t(6)A37) in tRNAs that read codons beginning with adenine. Is involved in the transfer of the threonylcarbamoyl moiety of threonylcarbamoyl-AMP (TC-AMP) to the N6 group of A37, together with TsaE and TsaB. TsaD likely plays a direct catalytic role in this reaction. The polypeptide is tRNA N6-adenosine threonylcarbamoyltransferase (Escherichia coli (strain K12 / MC4100 / BW2952)).